We begin with the raw amino-acid sequence, 180 residues long: Putative adenylate kinase (180 aa).

ATP-binding residues include glycine 10, glycine 12, lysine 13, threonine 14, and threonine 15. The segment at 30–50 (NLRDFALEKGIGEVKGDELEV) is NMP. The LID stretch occupies residues 99 to 109 (ERGYSKDKIGE). 2 residues coordinate ATP: arginine 100 and lysine 138.

It belongs to the adenylate kinase family. AK6 subfamily. As to quaternary structure, interacts with uS11. Not a structural component of 40S pre-ribosomes, but transiently interacts with them by binding to uS11.

It carries out the reaction AMP + ATP = 2 ADP. It catalyses the reaction ATP + H2O = ADP + phosphate + H(+). In terms of biological role, broad-specificity nucleoside monophosphate (NMP) kinase that catalyzes the reversible transfer of the terminal phosphate group between nucleoside triphosphates and monophosphates. Also has ATPase activity. Involved in the late maturation steps of the 30S ribosomal particles, specifically 16S rRNA maturation. While NMP activity is not required for ribosome maturation, ATPase activity is. Associates transiently with small ribosomal subunit protein uS11. ATP hydrolysis breaks the interaction with uS11. May temporarily remove uS11 from the ribosome to enable a conformational change of the ribosomal RNA that is needed for the final maturation step of the small ribosomal subunit. This Pyrococcus furiosus (strain ATCC 43587 / DSM 3638 / JCM 8422 / Vc1) protein is Putative adenylate kinase.